A 589-amino-acid polypeptide reads, in one-letter code: 3-hydroxy-3-methylglutaryl coenzyme A reductase 2-B (589 aa).

Residues 1 to 35 (MDVRRRPVTKTLTAGEPLKSQNQHSSSLKASDALP) are Lumenal-facing. Residues 36-56 (LPLYLTNGLFFTMFFSVMYFL) traverse the membrane as a helical segment. Residues 57 to 79 (LHRWREKIRNSVPLHVVTLSELA) are Cytoplasmic-facing. The chain crosses the membrane as a helical span at residues 80–100 (ALVLLVASVIYLLGFFGIGFV). At 101-544 (QSLIRPSPDS…SKESPGPNSR (444 aa)) the chain is on the lumenal side. Asn256 carries N-linked (GlcNAc...) asparagine glycosylation. Glu268 functions as the Charge relay system in the catalytic mechanism. The N-linked (GlcNAc...) asparagine glycan is linked to Asn332. Catalysis depends on charge relay system residues Lys400 and Asp476. Residues 545 to 565 (LLASIVAGSVLAGELSLMSAL) form a helical membrane-spanning segment. Residues 566 to 589 (AAGQLVKSHMKFNRSSKDVSKLSS) are Cytoplasmic-facing. His574 acts as the Proton donor in catalysis.

The protein belongs to the HMG-CoA reductase family.

Its subcellular location is the endoplasmic reticulum membrane. The catalysed reaction is (R)-mevalonate + 2 NADP(+) + CoA = (3S)-3-hydroxy-3-methylglutaryl-CoA + 2 NADPH + 2 H(+). It functions in the pathway metabolic intermediate biosynthesis; (R)-mevalonate biosynthesis; (R)-mevalonate from acetyl-CoA: step 3/3. In terms of biological role, catalyzes the synthesis of mevalonate, the specific precursor of all isoprenoid compounds present in plants. Component of the triterpene saponins (e.g. ginsenosides or panaxosides) and phytosterols biosynthetic pathways. Promotes triterpenes accumulation in roots. This Panax ginseng (Korean ginseng) protein is 3-hydroxy-3-methylglutaryl coenzyme A reductase 2-B.